The chain runs to 240 residues: Keratinocyte-associated protein 3 (240 aa).

The next 4 helical transmembrane spans lie at 21 to 41 (VGLA…VLHG), 63 to 83 (VISV…LLAS), 95 to 115 (LLAL…GLLL), and 163 to 183 (ALAL…LSGY).

This sequence belongs to the TMEM54 family.

It is found in the membrane. The sequence is that of Keratinocyte-associated protein 3 (KRTCAP3) from Bos taurus (Bovine).